A 381-amino-acid polypeptide reads, in one-letter code: 5-cytosine rRNA methyltransferase NSUN4 (381 aa).

The transit peptide at 1–25 (MAAPVLRCVRKLLKLVDFTPVPRRY) directs the protein to the mitochondrion. S-adenosyl-L-methionine-binding residues include Gly182, Gly183, Lys184, and Asp201. At Ser203 the chain carries Phosphoserine. Residues Arg206, Asp234, Gly235, and Asp252 each coordinate S-adenosyl-L-methionine. Cys307 acts as the Nucleophile in catalysis.

It belongs to the class I-like SAM-binding methyltransferase superfamily. RsmB/NOP family. In terms of assembly, heterodimer with MTERFD2/MTERF4; this interaction seems to be required for NSUN4 recruitment to the mitochondrial large ribosomal subunit.

It is found in the mitochondrion. The catalysed reaction is a cytidine in rRNA + S-adenosyl-L-methionine = a 5-methylcytidine in rRNA + S-adenosyl-L-homocysteine + H(+). It catalyses the reaction a cytidine in mRNA + S-adenosyl-L-methionine = a 5-methylcytidine in mRNA + S-adenosyl-L-homocysteine + H(+). Functionally, mitochondrial RNA cytosine C(5)-methyltransferase that methylates cytosine to 5-methylcytosine (m5C) in various RNAs, such as rRNAs, mRNAs and some long non-coding RNAs (lncRNAs). Involved in mitochondrial ribosome small subunit (SSU) maturation by catalyzing methylation of mitochondrial 12S rRNA; the function is independent of MTERFD2/MTERF4 and assembled mitochondrial ribosome large subunit (LSU). Targeted to LSU by MTERFD2/MTERF4 and probably is involved in a final step in ribosome biogenesis to ensure that SSU and LSU are assembled. In vitro can methylate 16S rRNA of the LSU; the methylation is enhanced by MTERFD/MTERF4. Also acts as a regulator of innate immunity by marking double-stranded mitochondrial RNAs(mt-dsRNAs) generated in response to stress: catalyzes m5C modification on mitochondrial RNAs, such as a mRNAs and lncRNAs, with a preference for the termini of light-strand lncRNAs, promoting their degradation and cytosolic release. Modified light-strand lncRNAs are then recognized by C1QBP reader and recruited to the mitochondrial degradosome complex, which promotes their degradation. This chain is 5-cytosine rRNA methyltransferase NSUN4, found in Mus musculus (Mouse).